The following is a 205-amino-acid chain: Thymidine kinase (205 aa).

Residues 9–16 (SAMNAGKS) and 87–90 (DECQ) each bind ATP. Catalysis depends on Glu-88, which acts as the Proton acceptor. Residues Cys-145, Cys-147, Cys-182, and His-185 each contribute to the Zn(2+) site.

The protein belongs to the thymidine kinase family. Homotetramer.

The protein resides in the cytoplasm. It catalyses the reaction thymidine + ATP = dTMP + ADP + H(+). Its activity is regulated as follows. Allosteric enzyme which is feedback inhibited by dTTP and activated by a number of dNDP and dNTP. Its function is as follows. Phosphorylates both thymidine and deoxyuridine. This chain is Thymidine kinase, found in Escherichia coli (strain K12).